Consider the following 303-residue polypeptide: uncharacterized protein (303 aa).

This is an uncharacterized protein from Leptospira interrogans.